We begin with the raw amino-acid sequence, 388 residues long: Mannitol-1-phosphate 5-dehydrogenase (388 aa).

4–15 (AVHFGAGNIGRG) provides a ligand contact to NAD(+).

Belongs to the mannitol dehydrogenase family.

It carries out the reaction D-mannitol 1-phosphate + NAD(+) = beta-D-fructose 6-phosphate + NADH + H(+). This Thermoanaerobacter pseudethanolicus (strain ATCC 33223 / 39E) (Clostridium thermohydrosulfuricum) protein is Mannitol-1-phosphate 5-dehydrogenase.